Reading from the N-terminus, the 328-residue chain is Extracellular exo-alpha-(1-&gt;5)-L-arabinofuranosidase (328 aa).

Positions 1 to 43 (MCTREAVRMSREHDLPEIPSRRLLLKGAAAAGALTAVPGVAHA) form a signal peptide, tat-tyPE signal. Residue Asp-60 is the Proton acceptor of the active site. Glu-236 functions as the Proton donor in the catalytic mechanism.

It belongs to the glycosyl hydrolase 43 family. Post-translationally, predicted to be exported by the Tat system. The position of the signal peptide cleavage has been experimentally proven.

The protein resides in the secreted. The catalysed reaction is Hydrolysis of terminal non-reducing alpha-L-arabinofuranoside residues in alpha-L-arabinosides.. The protein operates within glycan metabolism; L-arabinan degradation. In terms of biological role, involved in the degradation of arabinan and is a key enzyme in the complete degradation of the plant cell wall. Catalyzes only the cleavage of terminal alpha-(1-&gt;5) arabinofuranosyl bonds of arabinan present in the arabinofuranosyl polysaccharides or oligosaccharides. It cannot act on other arabinose-containing polysaccharides and arabinoxylo-oligosaccharides. The chain is Extracellular exo-alpha-(1-&gt;5)-L-arabinofuranosidase from Streptomyces chartreusis.